The chain runs to 268 residues: Small ribosomal subunit protein eS1 (268 aa).

A disordered region spans residues Met-1–Val-21.

The protein belongs to the eukaryotic ribosomal protein eS1 family. Component of the small ribosomal subunit. Mature ribosomes consist of a small (40S) and a large (60S) subunit. The 40S subunit contains about 33 different proteins and 1 molecule of RNA (18S). The 60S subunit contains about 49 different proteins and 3 molecules of RNA (28S, 5.8S and 5S).

The protein resides in the cytoplasm. Functionally, essential for oogenesis; required for late follicle cell development. This chain is Small ribosomal subunit protein eS1, found in Drosophila sechellia (Fruit fly).